Consider the following 260-residue polypeptide: Snake venom serine protease homolog KN4 (260 aa).

The signal sequence occupies residues 1 to 18; the sequence is MVLIRVLANLLILQLSYA. Positions 19 to 24 are excised as a propeptide; it reads QKSSEL. The Peptidase S1 domain maps to 25 to 251; the sequence is IIGGDECNIN…HLDWIQNIIA (227 aa). Disulfide bonds link Cys-31/Cys-165, Cys-52/Cys-68, Cys-100/Cys-258, Cys-144/Cys-212, Cys-176/Cys-191, and Cys-202/Cys-227. Asn-83, Asn-123, Asn-124, Asn-156, and Asn-172 each carry an N-linked (GlcNAc...) asparagine glycan. Residue Asn-253 is glycosylated (N-linked (GlcNAc...) asparagine).

The protein belongs to the peptidase S1 family. Snake venom subfamily. In terms of tissue distribution, expressed by the venom gland.

The protein localises to the secreted. Snake venom serine protease homolog that may act in the hemostasis system of the prey. This is Snake venom serine protease homolog KN4 from Trimeresurus stejnegeri (Chinese green tree viper).